Here is a 208-residue protein sequence, read N- to C-terminus: MSAKGGAIKDKWKMKKWYSVITPKAFGEVSLGSTPAYDITQTIGRRVETTLYDLTGDFSQVYVHLYFKIIGNEGDRLITRFVGHELSRDYLRSLIRRKSSKINSIFDVTTKDGYVVRVKGLVLTTYKCHQSQKTAIRKIINETVSKKASELSFDDFTQEVVFGRLANEIFEAAKKIYPLRKAEIEKTKVLKVPENLGKQVESSSVSSG.

This sequence belongs to the eukaryotic ribosomal protein eS1 family.

This is Small ribosomal subunit protein eS1 from Saccharolobus solfataricus (strain ATCC 35092 / DSM 1617 / JCM 11322 / P2) (Sulfolobus solfataricus).